Reading from the N-terminus, the 239-residue chain is Leucyl/phenylalanyl-tRNA--protein transferase (239 aa).

This sequence belongs to the L/F-transferase family.

It localises to the cytoplasm. The enzyme catalyses N-terminal L-lysyl-[protein] + L-leucyl-tRNA(Leu) = N-terminal L-leucyl-L-lysyl-[protein] + tRNA(Leu) + H(+). The catalysed reaction is N-terminal L-arginyl-[protein] + L-leucyl-tRNA(Leu) = N-terminal L-leucyl-L-arginyl-[protein] + tRNA(Leu) + H(+). It carries out the reaction L-phenylalanyl-tRNA(Phe) + an N-terminal L-alpha-aminoacyl-[protein] = an N-terminal L-phenylalanyl-L-alpha-aminoacyl-[protein] + tRNA(Phe). In terms of biological role, functions in the N-end rule pathway of protein degradation where it conjugates Leu, Phe and, less efficiently, Met from aminoacyl-tRNAs to the N-termini of proteins containing an N-terminal arginine or lysine. The chain is Leucyl/phenylalanyl-tRNA--protein transferase from Aliivibrio fischeri (strain ATCC 700601 / ES114) (Vibrio fischeri).